Here is a 343-residue protein sequence, read N- to C-terminus: Leucine-rich repeat-containing protein 23 (343 aa).

A compositionally biased stretch (acidic residues) spans 1 to 30 (MSDEDDLEDSEPDQDDSEKEEDEKETEEGE). Residues 1-47 (MSDEDDLEDSEPDQDDSEKEEDEKETEEGEDYRKEGEEFPEEWLPTP) form a disordered region. LRR repeat units follow at residues 92 to 113 (HLRY…NYLT), 114 to 134 (HLLW…NELP), 135 to 155 (YLQI…ISHP), 156 to 177 (RLET…DPEK), 180 to 200 (SLHT…INLP), 201 to 222 (KLKN…EDLS), 223 to 244 (NLTT…SREM), and 246 to 267 (SLQY…AKLR). The interval 208-343 (AQNMLKKVEG…RDLEPEQSLI (136 aa)) is interaction with RSPH9. The LRRCT domain occupies 280 to 318 (NPCTDETSYRQEALVQMPYLERLDKEFYEEEERAEADVI). Residues 307–329 (YEEEERAEADVIRQRLKEEKEQE) are a coiled coil. The span at 318–337 (IRQRLKEEKEQEPEPQRDLE) shows a compositional bias: basic and acidic residues. A disordered region spans residues 318 to 343 (IRQRLKEEKEQEPEPQRDLEPEQSLI).

As to quaternary structure, component of the axonemal radial spoke complex. Interacts with RSPH3. Interacts with RSPH9. As to expression, expressed in spermatozoa.

The protein localises to the cell projection. It localises to the cilium. Its subcellular location is the flagellum. The protein resides in the cytoplasm. It is found in the cytoskeleton. The protein localises to the flagellum axoneme. Essential for sperm motility and male fertility. Plays an important role in the proper assembly of the third radial spoke (RS3) head and the bridge structure between RS2 and RS3 in the sperm flagella. The polypeptide is Leucine-rich repeat-containing protein 23 (LRRC23) (Homo sapiens (Human)).